We begin with the raw amino-acid sequence, 150 residues long: Cytochrome c oxidase subunit 5A, mitochondrial (150 aa).

A mitochondrion-targeting transit peptide spans 1 to 41 (MLGAALRRCAVAATTWAGPRGHLHSARTPGPAAAIQSVRCY). An SIFI-degron motif is present at residues 2-17 (LGAALRRCAVAATTWA). Residues K87 and K113 each carry the N6-acetyllysine modification. T141 is modified (phosphothreonine).

It belongs to the cytochrome c oxidase subunit 5A family. As to quaternary structure, component of the cytochrome c oxidase (complex IV, CIV), a multisubunit enzyme composed of 14 subunits. The complex is composed of a catalytic core of 3 subunits MT-CO1, MT-CO2 and MT-CO3, encoded in the mitochondrial DNA, and 11 supernumerary subunits COX4I, COX5A, COX5B, COX6A, COX6B, COX6C, COX7A, COX7B, COX7C, COX8 and NDUFA4, which are encoded in the nuclear genome. The complex exists as a monomer or a dimer and forms supercomplexes (SCs) in the inner mitochondrial membrane with NADH-ubiquinone oxidoreductase (complex I, CI) and ubiquinol-cytochrome c oxidoreductase (cytochrome b-c1 complex, complex III, CIII), resulting in different assemblies (supercomplex SCI(1)III(2)IV(1) and megacomplex MCI(2)III(2)IV(2)). Interacts with AFG1L. Interacts with RAB5IF. In terms of processing, in response to mitochondrial stress, the precursor protein is ubiquitinated by the SIFI complex in the cytoplasm before mitochondrial import, leading to its degradation. Within the SIFI complex, UBR4 initiates ubiquitin chain that are further elongated or branched by KCMF1.

The protein localises to the mitochondrion inner membrane. The protein operates within energy metabolism; oxidative phosphorylation. Its function is as follows. Component of the cytochrome c oxidase, the last enzyme in the mitochondrial electron transport chain which drives oxidative phosphorylation. The respiratory chain contains 3 multisubunit complexes succinate dehydrogenase (complex II, CII), ubiquinol-cytochrome c oxidoreductase (cytochrome b-c1 complex, complex III, CIII) and cytochrome c oxidase (complex IV, CIV), that cooperate to transfer electrons derived from NADH and succinate to molecular oxygen, creating an electrochemical gradient over the inner membrane that drives transmembrane transport and the ATP synthase. Cytochrome c oxidase is the component of the respiratory chain that catalyzes the reduction of oxygen to water. Electrons originating from reduced cytochrome c in the intermembrane space (IMS) are transferred via the dinuclear copper A center (CU(A)) of subunit 2 and heme A of subunit 1 to the active site in subunit 1, a binuclear center (BNC) formed by heme A3 and copper B (CU(B)). The BNC reduces molecular oxygen to 2 water molecules using 4 electrons from cytochrome c in the IMS and 4 protons from the mitochondrial matrix. This is Cytochrome c oxidase subunit 5A, mitochondrial (COX5A) from Symphalangus syndactylus (Siamang).